The chain runs to 456 residues: MGEIIKYKGFDHVWQYSGPWLYCLIGIYISLPVLAYHILPWIFHKNRSNKRKTISIFVLGDLGHSPRMCYHASSFSKLDYYVNLCGYVETEPSHQIVDDVNIDIIPIEAIKNTNNLPYIMFAILKVVRQCGKIWSILWDTRGSDYIMIQNPPSIPILLIVILFKTVFSRETKLIIDWHNLNYTILNLRYNNLNHPFVKLVKLYEKILGQFANLNITVTKSMKKYLVKEFGFQKSKIVTLYDRPGVQFQPLSNKREFMSEHKLFEDIDIEKYKVLISSTSFTPDEDFNILLDALKNYENTPNTPPILLIVTGKGPLKGKFLETVDKLEFTNKVCVKSAWLSSEDYPKVLACADLGISLHTSSSGIDLPMKIVDFFGCGVPVVSLDFPAIDELVKNKVNGLITNSKSDQTKEVARLVTEVFTDDALLRSIKEGALEESNSRWDENWMQTFSSIFENKS.

At 1–22 the chain is on the lumenal side; sequence MGEIIKYKGFDHVWQYSGPWLY. Residues 23 to 43 form a helical membrane-spanning segment; that stretch reads CLIGIYISLPVLAYHILPWIF. The Cytoplasmic segment spans residues 44-103; sequence HKNRSNKRKTISIFVLGDLGHSPRMCYHASSFSKLDYYVNLCGYVETEPSHQIVDDVNID. Residues 104 to 124 constitute an intramembrane region (helical); that stretch reads IIPIEAIKNTNNLPYIMFAIL. Over 125–456 the chain is Cytoplasmic; that stretch reads KVVRQCGKIW…TFSSIFENKS (332 aa).

It belongs to the glycosyltransferase group 1 family.

Its subcellular location is the endoplasmic reticulum membrane. It carries out the reaction an N,N'-diacetylchitobiosyl-diphospho-di-trans,poly-cis-dolichol + GDP-alpha-D-mannose = a beta-D-Man-(1-&gt;4)-beta-D-GlcNAc-(1-&gt;4)-alpha-D-GlcNAc-diphospho-di-trans,poly-cis-dolichol + GDP + H(+). The protein operates within protein modification; protein glycosylation. Its function is as follows. Participates in the formation of the lipid-linked precursor oligosaccharide for N-glycosylation. Involved in assembling the dolichol-pyrophosphate-GlcNAc(2)-Man(5) intermediate on the cytoplasmic surface of the ER. This is Chitobiosyldiphosphodolichol beta-mannosyltransferase (ALG1) from Candida albicans (strain SC5314 / ATCC MYA-2876) (Yeast).